We begin with the raw amino-acid sequence, 349 residues long: N-acetyl-gamma-glutamyl-phosphate reductase (349 aa).

Residue cysteine 152 is part of the active site.

This sequence belongs to the NAGSA dehydrogenase family. Type 1 subfamily.

The protein resides in the cytoplasm. The enzyme catalyses N-acetyl-L-glutamate 5-semialdehyde + phosphate + NADP(+) = N-acetyl-L-glutamyl 5-phosphate + NADPH + H(+). It functions in the pathway amino-acid biosynthesis; L-arginine biosynthesis; N(2)-acetyl-L-ornithine from L-glutamate: step 3/4. Catalyzes the NADPH-dependent reduction of N-acetyl-5-glutamyl phosphate to yield N-acetyl-L-glutamate 5-semialdehyde. The chain is N-acetyl-gamma-glutamyl-phosphate reductase from Clavibacter sepedonicus (Clavibacter michiganensis subsp. sepedonicus).